The sequence spans 304 residues: Ribosomal protein L11 methyltransferase (304 aa).

Residues Thr-147, Gly-168, Asp-190, and Asn-238 each coordinate S-adenosyl-L-methionine.

Belongs to the methyltransferase superfamily. PrmA family.

It localises to the cytoplasm. The enzyme catalyses L-lysyl-[protein] + 3 S-adenosyl-L-methionine = N(6),N(6),N(6)-trimethyl-L-lysyl-[protein] + 3 S-adenosyl-L-homocysteine + 3 H(+). Its function is as follows. Methylates ribosomal protein L11. The sequence is that of Ribosomal protein L11 methyltransferase from Prochlorococcus marinus (strain SARG / CCMP1375 / SS120).